Reading from the N-terminus, the 397-residue chain is Phosphoglycerate transport regulatory protein PgtC (397 aa).

The signal sequence occupies residues 1-24 (MFGSCQAYSRELVMATTFSPSATA). A helical membrane pass occupies residues 102-117 (TSVAVAVSGFGLLINR).

The protein resides in the cell membrane. Its function is as follows. Required for pgtP expression, it may act jointly with the PgtA/PgtB signaling proteins. The polypeptide is Phosphoglycerate transport regulatory protein PgtC (pgtC) (Salmonella typhi).